The chain runs to 359 residues: ATP-dependent (S)-NAD(P)H-hydrate dehydratase (359 aa).

Positions 61-350 (LLEEARKVVP…SEINSVFVNN (290 aa)) constitute a YjeF C-terminal domain. Residues Gly-161 and 214-220 (NVVEFQR) each bind (6S)-NADPHX. ATP-binding positions include 256-260 (KGEVD) and 275-284 (GSPRRCGGQG). Asp-285 lines the (6S)-NADPHX pocket.

The protein belongs to the NnrD/CARKD family. It depends on Mg(2+) as a cofactor.

It carries out the reaction (6S)-NADHX + ATP = ADP + phosphate + NADH + H(+). It catalyses the reaction (6S)-NADPHX + ATP = ADP + phosphate + NADPH + H(+). In terms of biological role, catalyzes the dehydration of the S-form of NAD(P)HX at the expense of ATP, which is converted to ADP. Together with NAD(P)HX epimerase, which catalyzes the epimerization of the S- and R-forms, the enzyme allows the repair of both epimers of NAD(P)HX, a damaged form of NAD(P)H that is a result of enzymatic or heat-dependent hydration. This is ATP-dependent (S)-NAD(P)H-hydrate dehydratase from Ciona intestinalis (Transparent sea squirt).